The sequence spans 263 residues: Diphthine synthase (263 aa).

Residues leucine 9, aspartate 84, methionine 87, 112 to 113 (SI), leucine 164, alanine 207, and histidine 232 contribute to the S-adenosyl-L-methionine site.

It belongs to the diphthine synthase family. As to quaternary structure, homodimer.

The catalysed reaction is 2-[(3S)-amino-3-carboxypropyl]-L-histidyl-[translation elongation factor 2] + 3 S-adenosyl-L-methionine = diphthine-[translation elongation factor 2] + 3 S-adenosyl-L-homocysteine + 3 H(+). Its pathway is protein modification; peptidyl-diphthamide biosynthesis. Its function is as follows. S-adenosyl-L-methionine-dependent methyltransferase that catalyzes the trimethylation of the amino group of the modified target histidine residue in translation elongation factor 2 (EF-2), to form an intermediate called diphthine. The three successive methylation reactions represent the second step of diphthamide biosynthesis. This chain is Diphthine synthase, found in Methanosphaera stadtmanae (strain ATCC 43021 / DSM 3091 / JCM 11832 / MCB-3).